The sequence spans 129 residues: Small ribosomal subunit protein uS11 (129 aa).

Belongs to the universal ribosomal protein uS11 family. As to quaternary structure, part of the 30S ribosomal subunit. Interacts with proteins S7 and S18. Binds to IF-3.

In terms of biological role, located on the platform of the 30S subunit, it bridges several disparate RNA helices of the 16S rRNA. Forms part of the Shine-Dalgarno cleft in the 70S ribosome. The protein is Small ribosomal subunit protein uS11 of Limosilactobacillus fermentum (strain NBRC 3956 / LMG 18251) (Lactobacillus fermentum).